The sequence spans 402 residues: Envelope glycoprotein D (402 aa).

A signal peptide spans 1–30 (MSTFKLMMDGRLVFAMAIAILSVVLSCGTC). Topologically, residues 31-355 (EKAKRAVRGR…NSTFVGISVG (325 aa)) are virion surface. N-linked (GlcNAc...) asparagine; by host glycans are attached at residues asparagine 53 and asparagine 61. 3 cysteine pairs are disulfide-bonded: cysteine 88-cysteine 209, cysteine 126-cysteine 223, and cysteine 138-cysteine 147. Residues 281-315 (PDNHPGFDSVESEITQNKTDPKPGQADPKPNQPFK) are disordered. 2 N-linked (GlcNAc...) asparagine; by host glycosylation sites follow: asparagine 297 and asparagine 346. The helical transmembrane segment at 356–372 (LGIAGLVLVGVILYVCL) threads the bilayer. Topologically, residues 373-402 (RRKKELKKSAQNGLTRLRSTFKDVKYTQLP) are intravirion.

Belongs to the herpesviridae glycoprotein D family.

The protein resides in the virion membrane. In terms of biological role, envelope glycoprotein that binds to host cell entry receptors, promoting the virus entry into host cells. May trigger fusion with host membrane, by recruiting the fusion machinery composed of gB and gH/gL. The chain is Envelope glycoprotein D (gD) from Equus caballus (Horse).